A 406-amino-acid polypeptide reads, in one-letter code: 1-deoxy-D-xylulose 5-phosphate reductoisomerase (406 aa).

NADPH-binding residues include Thr21, Gly22, Ser23, Ile24, Gly47, Gln50, and Asn127. Position 128 (Lys128) interacts with 1-deoxy-D-xylulose 5-phosphate. Glu129 is a binding site for NADPH. Mn(2+) is bound at residue Asp151. Residues Ser152, Glu153, Ser177, and His200 each contribute to the 1-deoxy-D-xylulose 5-phosphate site. Glu153 contacts Mn(2+). NADPH is bound at residue Gly206. Positions 213, 218, 219, and 222 each coordinate 1-deoxy-D-xylulose 5-phosphate. Glu222 contacts Mn(2+).

It belongs to the DXR family. Mg(2+) serves as cofactor. It depends on Mn(2+) as a cofactor.

The enzyme catalyses 2-C-methyl-D-erythritol 4-phosphate + NADP(+) = 1-deoxy-D-xylulose 5-phosphate + NADPH + H(+). It participates in isoprenoid biosynthesis; isopentenyl diphosphate biosynthesis via DXP pathway; isopentenyl diphosphate from 1-deoxy-D-xylulose 5-phosphate: step 1/6. In terms of biological role, catalyzes the NADPH-dependent rearrangement and reduction of 1-deoxy-D-xylulose-5-phosphate (DXP) to 2-C-methyl-D-erythritol 4-phosphate (MEP). This is 1-deoxy-D-xylulose 5-phosphate reductoisomerase from Mycobacterium leprae (strain Br4923).